The chain runs to 270 residues: Transcriptional regulator BrlR (270 aa).

M1 is a binding site for 3',3'-c-di-GMP. In terms of domain architecture, HTH merR-type spans 1–71; it reads MLTIGQLARI…LEAIDRLKRD (71 aa). A DNA-binding region (H-T-H motif) is located at residues 4-23; it reads IGQLARIFEISTKTLRHYDA. Residues R31, S34, D35, Y40, R67, R70, R86, and Y270 each contribute to the 3',3'-c-di-GMP site. Positions 120–270 are involved in effector-binding, probably including pyocyanine-binding; it reads MHARIVERPA…SQVDLYIPIY (151 aa).

Monomer. Homodimer; dimer formation enhanced in the presence of the second messenger, cyclic di-GMP (c-di-GMP). Homotetramer; dimer of dimers, arranged in a head-to-tail fashion, which may reduce DNA-binding ability. Conformational changes upon binding c-di-GMP or pyocyanine may facilitate DNA binding.

Its function is as follows. Transcriptional regulator. Responsive to the second messenger cyclic di-GMP (c-di-GMP) and to the virulence factor pyocyanine, which both enhance gene expression and promoter DNA binding of BrlR. Activates expression of operons encoding the multidrug efflux pumps MexAB-OprM and MexEF-OprN and several ABC transport systems, acting by direct binding to their respective promoters. Also acts as a repressor of the two component regulatory system, PhoPQ. Binds to promoter of its own gene. Contributes to the antimicrobial tolerance exhibited by biofilms, acting, at least in part, by activating expression of multidrug efflux pumps and ABC transporters. The sequence is that of Transcriptional regulator BrlR from Pseudomonas aeruginosa (strain ATCC 15692 / DSM 22644 / CIP 104116 / JCM 14847 / LMG 12228 / 1C / PRS 101 / PAO1).